A 344-amino-acid polypeptide reads, in one-letter code: Ferrochelatase (344 aa).

Fe cation is bound by residues histidine 214 and glutamate 295.

Belongs to the ferrochelatase family.

The protein resides in the cytoplasm. It carries out the reaction heme b + 2 H(+) = protoporphyrin IX + Fe(2+). It participates in porphyrin-containing compound metabolism; protoheme biosynthesis; protoheme from protoporphyrin-IX: step 1/1. In terms of biological role, catalyzes the ferrous insertion into protoporphyrin IX. This is Ferrochelatase from Rhizobium etli (strain CIAT 652).